The chain runs to 439 residues: Glutamate--tRNA ligase 1 (439 aa).

The short motif at 6-16 (PSPTGDMHIGN) is the 'HIGH' region element. A 'KMSKS' region motif is present at residues 232–236 (KMSKR). ATP is bound at residue Lys-235.

It belongs to the class-I aminoacyl-tRNA synthetase family. Glutamate--tRNA ligase type 1 subfamily. In terms of assembly, monomer.

The protein localises to the cytoplasm. The catalysed reaction is tRNA(Glu) + L-glutamate + ATP = L-glutamyl-tRNA(Glu) + AMP + diphosphate. Catalyzes the attachment of glutamate to tRNA(Glu) in a two-step reaction: glutamate is first activated by ATP to form Glu-AMP and then transferred to the acceptor end of tRNA(Glu). This chain is Glutamate--tRNA ligase 1, found in Helicobacter acinonychis (strain Sheeba).